A 239-amino-acid chain; its full sequence is Probable transcriptional regulatory protein Pnuc_0618 (239 aa).

A disordered region spans residues methionine 1–arginine 21.

Belongs to the TACO1 family.

The protein localises to the cytoplasm. The chain is Probable transcriptional regulatory protein Pnuc_0618 from Polynucleobacter asymbioticus (strain DSM 18221 / CIP 109841 / QLW-P1DMWA-1) (Polynucleobacter necessarius subsp. asymbioticus).